The primary structure comprises 454 residues: Photosystem II CP47 reaction center protein (454 aa).

A run of 6 helical transmembrane segments spans residues M6–I26, I47–W61, G86–F102, I149–S164, V183–V198, and S403–R418.

It belongs to the PsbB/PsbC family. PsbB subfamily. PSII is composed of 1 copy each of membrane proteins PsbA, PsbB, PsbC, PsbD, PsbE, PsbF, PsbH, PsbI, PsbJ, PsbK, PsbL, PsbM, PsbT, PsbX, PsbY, PsbZ, Psb30/Ycf12, at least 3 peripheral proteins of the oxygen-evolving complex and a large number of cofactors. It forms dimeric complexes. It depends on Binds multiple chlorophylls. PSII binds additional chlorophylls, carotenoids and specific lipids. as a cofactor.

The protein resides in the plastid. It localises to the chloroplast thylakoid membrane. In terms of biological role, one of the components of the core complex of photosystem II (PSII). It binds chlorophyll and helps catalyze the primary light-induced photochemical processes of PSII. PSII is a light-driven water:plastoquinone oxidoreductase, using light energy to abstract electrons from H(2)O, generating O(2) and a proton gradient subsequently used for ATP formation. The sequence is that of Photosystem II CP47 reaction center protein from Ostreococcus tauri.